A 766-amino-acid chain; its full sequence is MSKVTVQDIEAVDDYWGPTFRSILEGNNTKQIGDQLEQRIRSHDKEIERICNLYYQGFIDSIQELLQVRTQAQQLHNEVHSLDTSLRQISASLIQQGNDLVRARQIESNLASAIEALKSCLPALECYMKFTQQAKNKQYYQALRTLETLETEHLTRLKTHNYRFATQMQIQIPIIKENIRRSSASDFREFLENIRKFSPRIGELAITHTKQLQKRDINAIIAEHMQQMNGGEAGGAGAGGDDDGANVSAQDLIDFSPIYRCLHIYMVLGQREYFEKDYRQQRRDQAKLVLQPPPNMHDNLEAYKTYICAIVGFFVVEDHVKNTAGDVVTSSYLEDLWSSSLTKFVNEISMSSSSCTDPNILLRIKNLIMLSINTFKCYGYTVNILWELLHNMRDHYNEVLLQRWVHVFREILDKEQFLPMVVQNTEEYECIIERFPFHSEQLENAPFPKKFPFSRMVPEVYHQAKEFMYACMKFAEELTLSPNEVAAMVRKAANLLLTRSFSGCLSVVFRQPSITLTQLIQIIIDTQYLEKAGPFLDEFVCHMTNTERSVSQTPSAMFHVARQDAEKQVGLRICSKIDEFFELSAYDWLLVEPPGIASAFITDMISYLKSTFDSFAFKLPHIAQAACRRTFEHIAEKIYSIMYDEDVKQISTGALTQINLDLMQCEFFAASEPVPGLKEGELSKYFLRNRQLLDLLILEEWSTYFHDYGKQENRYHLVQPQSIIVILEKIREADKKPIFSLVRKNDKKKLLETVLKQLKHIADRQN.

Positions 28 to 90 form a coiled coil; sequence NTKQIGDQLE…SLDTSLRQIS (63 aa).

It belongs to the SEC15 family. As to quaternary structure, the exocyst complex is composed of Sec3/Exoc1, Sec5/Exoc2, Sec6/Exoc3, Sec8/Exoc4, Sec10/Exoc5, Sec15/Exoc6, Exo70/Exoc7 and Exo84/Exoc8. Interacts with RAB3, RAB8, RAB11 and RAB27. In terms of tissue distribution, detected in developing rhabdomeres in photoreceptor cells.

It localises to the cell projection. The protein resides in the rhabdomere. Its function is as follows. Component of the exocyst complex involved in the docking of exocytic vesicles with fusion sites on the plasma membrane. The protein is Exocyst complex component 6 of Drosophila melanogaster (Fruit fly).